Reading from the N-terminus, the 110-residue chain is PCNA-associated factor (110 aa).

Lysine 15 is covalently cross-linked (Glycyl lysine isopeptide (Lys-Gly) (interchain with G-Cter in ubiquitin)). The D-box signature appears at 23–34; that stretch reads RKVLGSSTFVTN. N6-acetyllysine; alternate is present on lysine 24. Lysine 24 participates in a covalent cross-link: Glycyl lysine isopeptide (Lys-Gly) (interchain with G-Cter in ubiquitin); alternate. Phosphoserine is present on serine 28. A compositionally biased stretch (low complexity) spans 29-39; sequence STFVTNSSGSS. The interval 29–110 is disordered; the sequence is STFVTNSSGS…QPDHRDDENE (82 aa). Positions 61 to 71 match the PIP-box motif; the sequence is QKGIGEFFRLS. The residue at position 71 (serine 71) is a Phosphoserine. A compositionally biased stretch (basic and acidic residues) spans 71 to 80; sequence SPKDSKKENQ. Positions 77-79 match the KEN box motif; it reads KEN. Residues 84–96 carry the Initiation motif motif; it reads EAGSSGLGKAKRK.

Interacts (when monoubiquitinated at Lys-15 and Lys-24) with PCNA. Interacts with isoform 2/p33ING1b of ING1. Interacts with BRCA1. In terms of processing, monoubiquitinated at Lys-15 and Lys-24 during normal S phase, promoting its association with PCNA. Also diubiquitinated at these 2 sites. Following DNA damage, monoubiquitin chains at Lys-15 and Lys-24 are probably extended, leading to disrupt the interaction with PCNA. Polyubiquitinated by the APC/C complex at the mitotic exit, leading to its degradation by the proteasome.

The protein resides in the nucleus. It localises to the cytoplasm. Its subcellular location is the perinuclear region. Functionally, PCNA-binding protein that acts as a regulator of DNA repair during DNA replication. Following DNA damage, the interaction with PCNA is disrupted, facilitating the interaction between monoubiquitinated PCNA and the translesion DNA synthesis DNA polymerase eta (POLH) at stalled replisomes, facilitating the bypass of replication-fork-blocking lesions. Also acts as a regulator of centrosome number. This Rattus norvegicus (Rat) protein is PCNA-associated factor.